A 397-amino-acid chain; its full sequence is Galactokinase (397 aa).

The tract at residues 1–27 (MGEAVGEPSASGSGSCTGRSRRGCGRR) is disordered. Over residues 9–18 (SASGSGSCTG) the composition is skewed to low complexity. 36–39 (EHTD) contacts substrate. Residues serine 69 and 124-130 (GAGLSSS) each bind ATP. Serine 130 and glutamate 161 together coordinate Mg(2+). Aspartate 173 serves as the catalytic Proton acceptor. Tyrosine 225 serves as a coordination point for substrate.

It belongs to the GHMP kinase family. GalK subfamily.

It localises to the cytoplasm. It catalyses the reaction alpha-D-galactose + ATP = alpha-D-galactose 1-phosphate + ADP + H(+). It participates in carbohydrate metabolism; galactose metabolism. Its function is as follows. Catalyzes the transfer of the gamma-phosphate of ATP to D-galactose to form alpha-D-galactose-1-phosphate (Gal-1-P). The protein is Galactokinase of Streptomyces lividans.